The chain runs to 753 residues: Catalase-peroxidase (753 aa).

The segment at residues 91-243 (WHSAGTYRIG…LGAVQMGLIY (153 aa)) is a cross-link (tryptophyl-tyrosyl-methioninium (Trp-Tyr) (with M-269)). Histidine 92 functions as the Proton acceptor in the catalytic mechanism. The segment at residues 243-269 (YVNPEGPDGNPDPLAAAHDIRETFARM) is a cross-link (tryptophyl-tyrosyl-methioninium (Tyr-Met) (with W-91)). Residue histidine 284 coordinates heme b.

The protein belongs to the peroxidase family. Peroxidase/catalase subfamily. As to quaternary structure, homodimer or homotetramer. Requires heme b as cofactor. Formation of the three residue Trp-Tyr-Met cross-link is important for the catalase, but not the peroxidase activity of the enzyme.

It carries out the reaction H2O2 + AH2 = A + 2 H2O. It catalyses the reaction 2 H2O2 = O2 + 2 H2O. In terms of biological role, bifunctional enzyme with both catalase and broad-spectrum peroxidase activity. The polypeptide is Catalase-peroxidase (Paraburkholderia xenovorans (strain LB400)).